The following is a 1071-amino-acid chain: DNA-directed RNA polymerase subunit beta (1071 aa).

Belongs to the RNA polymerase beta chain family. In plastids the minimal PEP RNA polymerase catalytic core is composed of four subunits: alpha, beta, beta', and beta''. When a (nuclear-encoded) sigma factor is associated with the core the holoenzyme is formed, which can initiate transcription.

The protein localises to the plastid. The protein resides in the chloroplast. It catalyses the reaction RNA(n) + a ribonucleoside 5'-triphosphate = RNA(n+1) + diphosphate. Its function is as follows. DNA-dependent RNA polymerase catalyzes the transcription of DNA into RNA using the four ribonucleoside triphosphates as substrates. This is DNA-directed RNA polymerase subunit beta from Drimys granadensis.